Here is a 248-residue protein sequence, read N- to C-terminus: UPF0246 protein FN1762 (248 aa).

The protein belongs to the UPF0246 family.

The polypeptide is UPF0246 protein FN1762 (Fusobacterium nucleatum subsp. nucleatum (strain ATCC 25586 / DSM 15643 / BCRC 10681 / CIP 101130 / JCM 8532 / KCTC 2640 / LMG 13131 / VPI 4355)).